Consider the following 433-residue polypeptide: Type I acyl-CoA thioesterase mpaH (433 aa).

An abhydrolase domain region spans residues 58–246 (HGVGLPKELY…IKARFGTTAD (189 aa)). Valine 60 lines the substrate pocket. Serine 139 serves as the catalytic Nucleophile. Phenylalanine 140 lines the substrate pocket. Catalysis depends on residues aspartate 163 and histidine 365.

Belongs to the AB hydrolase superfamily. MpaH hydrolase family. As to quaternary structure, homodimer.

It is found in the peroxisome matrix. It catalyses the reaction mycophenolyl-CoA + H2O = mycophenolate + CoA + H(+). It functions in the pathway secondary metabolite biosynthesis; terpenoid biosynthesis. Type I acyl-CoA thioesterase; part of the gene cluster that mediates the biosynthesis of mycophenolic acid (MPA), the first isolated antibiotic natural product in the world obtained from a culture of Penicillium brevicompactum in 1893. MpaH acts as a peroxisomal acyl-CoA hydrolase that converts MPA-CoA into the final product MPA. The first step of the pathway is the synthesis of 5-methylorsellinic acid (5MOA) by the cytosolic polyketide synthase mpaC. 5MOA is then converted to the phthalide compound 5,7-dihydroxy-4,6-dimethylphthalide (DHMP) by the endoplasmic reticulum-bound cytochrome P450 monooxygenase mpaDE. MpaDE first catalyzes hydroxylation of 5-MOA to 4,6-dihydroxy-2-(hydroxymethyl)-3-methylbenzoic acid (DHMB). MpaDE then acts as a lactone synthase that catalyzes the ring closure to convert DHMB into DHMP. The next step is the prenylation of DHMP by the Golgi apparatus-associated prenyltransferase mpaA to yield farnesyl-DHMP (FDHMP). The ER-bound oxygenase mpaB then mediates the oxidative cleavage the C19-C20 double bond in FDHMP to yield FDHMP-3C via a mycophenolic aldehyde intermediate. The O-methyltransferase mpaG catalyzes the methylation of FDHMP-3C to yield MFDHMP-3C. After the cytosolic methylation of FDHMP-3C, MFDHMP-3C enters into peroxisomes probably via free diffusion due to its low molecular weight. Upon a peroxisomal CoA ligation reaction, catalyzed by a beta-oxidation component enzyme acyl-CoA ligase ACL891, MFDHMP-3C-CoA would then be restricted to peroxisomes for the following beta-oxidation pathway steps. The peroxisomal beta-oxidation machinery than converts MFDHMP-3C-CoA into MPA_CoA, via a beta-oxidation chain-shortening process. Finally mpaH acts as a peroxisomal acyl-CoA hydrolase with high substrate specificity toward MPA-CoA to release the final product MPA. The sequence is that of Type I acyl-CoA thioesterase mpaH from Penicillium brevicompactum.